Consider the following 202-residue polypeptide: Na(+)-translocating NADH-quinone reductase subunit E (202 aa).

Transmembrane regions (helical) follow at residues 11 to 31, 35 to 55, 81 to 101, 114 to 134, 144 to 164, and 180 to 200; these read SVFI…FLAM, INAA…TVPA, FLSF…MEMV, GVFL…LFMV, VVYG…LAGI, and LGIT…FGGI.

It belongs to the NqrDE/RnfAE family. As to quaternary structure, composed of six subunits; NqrA, NqrB, NqrC, NqrD, NqrE and NqrF.

It localises to the cell inner membrane. It catalyses the reaction a ubiquinone + n Na(+)(in) + NADH + H(+) = a ubiquinol + n Na(+)(out) + NAD(+). Functionally, NQR complex catalyzes the reduction of ubiquinone-1 to ubiquinol by two successive reactions, coupled with the transport of Na(+) ions from the cytoplasm to the periplasm. NqrA to NqrE are probably involved in the second step, the conversion of ubisemiquinone to ubiquinol. This chain is Na(+)-translocating NADH-quinone reductase subunit E, found in Cellvibrio japonicus (strain Ueda107) (Pseudomonas fluorescens subsp. cellulosa).